Reading from the N-terminus, the 395-residue chain is S-adenosylmethionine synthase (395 aa).

Position 15 (H15) interacts with ATP. D17 serves as a coordination point for Mg(2+). E43 is a binding site for K(+). L-methionine-binding residues include E56 and Q99. The tract at residues 99–109 is flexible loop; that stretch reads QSADIALGVDE. Residues 174–176, 240–241, D249, 255–256, A272, and K276 each bind ATP; these read DGK, RF, and RK. D249 contributes to the L-methionine binding site. K280 contacts L-methionine.

Belongs to the AdoMet synthase family. In terms of assembly, homotetramer; dimer of dimers. Mg(2+) is required as a cofactor. K(+) serves as cofactor.

The protein localises to the cytoplasm. The enzyme catalyses L-methionine + ATP + H2O = S-adenosyl-L-methionine + phosphate + diphosphate. It functions in the pathway amino-acid biosynthesis; S-adenosyl-L-methionine biosynthesis; S-adenosyl-L-methionine from L-methionine: step 1/1. Catalyzes the formation of S-adenosylmethionine (AdoMet) from methionine and ATP. The overall synthetic reaction is composed of two sequential steps, AdoMet formation and the subsequent tripolyphosphate hydrolysis which occurs prior to release of AdoMet from the enzyme. This Alkaliphilus oremlandii (strain OhILAs) (Clostridium oremlandii (strain OhILAs)) protein is S-adenosylmethionine synthase.